Here is a 429-residue protein sequence, read N- to C-terminus: Ribosomal RNA small subunit methyltransferase B (429 aa).

S-adenosyl-L-methionine contacts are provided by residues 254-260 (CAAPGGK), aspartate 277, aspartate 303, and aspartate 322. Catalysis depends on cysteine 375, which acts as the Nucleophile. The interval 397 to 419 (ALSETGTPDQPGQQNLPGGEEGD) is disordered. Residues 400–412 (ETGTPDQPGQQNL) show a composition bias toward polar residues.

Belongs to the class I-like SAM-binding methyltransferase superfamily. RsmB/NOP family.

It localises to the cytoplasm. The catalysed reaction is cytidine(967) in 16S rRNA + S-adenosyl-L-methionine = 5-methylcytidine(967) in 16S rRNA + S-adenosyl-L-homocysteine + H(+). In terms of biological role, specifically methylates the cytosine at position 967 (m5C967) of 16S rRNA. The chain is Ribosomal RNA small subunit methyltransferase B from Salmonella agona (strain SL483).